We begin with the raw amino-acid sequence, 164 residues long: Ribosome maturation factor RimP (164 aa).

This sequence belongs to the RimP family.

The protein resides in the cytoplasm. Required for maturation of 30S ribosomal subunits. The polypeptide is Ribosome maturation factor RimP (Mesoplasma florum (strain ATCC 33453 / NBRC 100688 / NCTC 11704 / L1) (Acholeplasma florum)).